The chain runs to 352 residues: Cyclin-dependent kinase-like 1 (352 aa).

The 284-residue stretch at 4 to 287 (YEKIGKIGEG…CEQLLQHPYF (284 aa)) folds into the Protein kinase domain. Residues 10–18 (IGEGSYGVV) and Lys-33 each bind ATP. The [NKR]KIAxRE motif lies at 45 to 51 (KKIALRE). Asp-126 acts as the Proton acceptor in catalysis.

This sequence belongs to the protein kinase superfamily. CMGC Ser/Thr protein kinase family. CDC2/CDKX subfamily.

It is found in the cytoplasm. Its subcellular location is the nucleus. The enzyme catalyses L-seryl-[protein] + ATP = O-phospho-L-seryl-[protein] + ADP + H(+). The catalysed reaction is L-threonyl-[protein] + ATP = O-phospho-L-threonyl-[protein] + ADP + H(+). The polypeptide is Cyclin-dependent kinase-like 1 (Rattus norvegicus (Rat)).